Consider the following 518-residue polypeptide: Calcium and calcium/calmodulin-dependent serine/threonine-protein kinase (518 aa).

The Protein kinase domain maps to 13-300 (YEISEILGRG…AQELLSHPWV (288 aa)). Residues 19-27 (LGRGGFSVV) and Lys-44 each bind ATP. Asp-165 functions as the Proton acceptor in the catalytic mechanism. Phosphothreonine is present on Thr-265. A calmodulin-binding region spans residues 323 to 336 (ARRKLRAAAIASVW). Residues 344-365 (TKKLRSLVGTYDLKEEEIESLR) adopt a coiled-coil conformation. 3 EF-hand domains span residues 394-429 (SLIP…LKNS), 430-465 (KGDD…LPEE), and 472-507 (TEPG…DSSL). 15 residues coordinate Ca(2+): Asp-407, Asn-409, Asp-411, Thr-413, Glu-418, Asp-443, Asp-445, Ser-447, Cys-449, Glu-454, Asp-485, Asn-487, Asp-489, Lys-491, and Glu-496.

Belongs to the protein kinase superfamily. CAMK Ser/Thr protein kinase family. CaMK subfamily. In terms of assembly, interacts with IPD3. Interacts with CIP73. In terms of processing, autophosphorylation stimulated by calcium. Occurs probably by an intermolecular mechanism. Mainly expressed in roots and nodules. Detected in leaves, stems and cotyledons.

The protein localises to the nucleus. The catalysed reaction is L-seryl-[protein] + ATP = O-phospho-L-seryl-[protein] + ADP + H(+). It carries out the reaction L-threonyl-[protein] + ATP = O-phospho-L-threonyl-[protein] + ADP + H(+). Its activity is regulated as follows. Activated by calcium/calmodulin binding after calcium-induced autophosphorylation. Functionally, calcium- and calmodulin-dependent protein kinase necessary and sufficient for dedifferentiation of root cortical cells into nodule initials. Not required for calcium spiking. Acts as central regulator of the nodule organogenesis program. Required for root hair curling and infection thread (IT) formation upon rhizobial infection, and arbuscule formation during arbuscular mycorrhiza (AM) fungal infection. Phosphorylates the downstream target IPD3, a protein required for root infection by symbiotic rhizobia and AM fungi. Phosphorylates the downstream target CIP73, a protein required for root nodule organogenesis. Mediates the phosphorylation of leghemoglobins (e.g. LB1) to modulate their oxygen O(2) affinity, thus regulating the diffusion of oxygen to the bacteroids in nodules. This chain is Calcium and calcium/calmodulin-dependent serine/threonine-protein kinase, found in Lotus japonicus (Lotus corniculatus var. japonicus).